Here is a 631-residue protein sequence, read N- to C-terminus: RNA polymerase sigma factor RpoD (631 aa).

The segment at Leu395 to Thr465 is sigma-70 factor domain-2. The Interaction with polymerase core subunit RpoC signature appears at Asp419–Gln422. Residues Glu474–His550 form a sigma-70 factor domain-3 region. Positions Ile563 to Asn616 are sigma-70 factor domain-4. The segment at residues Leu589–Ser608 is a DNA-binding region (H-T-H motif).

This sequence belongs to the sigma-70 factor family. RpoD/SigA subfamily. In terms of assembly, interacts transiently with the RNA polymerase catalytic core.

The protein resides in the cytoplasm. Sigma factors are initiation factors that promote the attachment of RNA polymerase to specific initiation sites and are then released. This sigma factor is the primary sigma factor during exponential growth. The polypeptide is RNA polymerase sigma factor RpoD (Borreliella burgdorferi (strain ATCC 35210 / DSM 4680 / CIP 102532 / B31) (Borrelia burgdorferi)).